Reading from the N-terminus, the 353-residue chain is Ribosome biogenesis protein BRX1 homolog (353 aa).

Residues 1–10 (MAATKRKRRG) are compositionally biased toward basic residues. The disordered stretch occupies residues 1 to 46 (MAATKRKRRGGFAVQAKKPKRNEKDAEPPAKRHATAEEVEEEERDR). The segment covering 22 to 36 (NEKDAEPPAKRHATA) has biased composition (basic and acidic residues). The 190-residue stretch at 60–249 (ERILIFSSRG…LIKIFQGSFG (190 aa)) folds into the Brix domain. K160 is covalently cross-linked (Glycyl lysine isopeptide (Lys-Gly) (interchain with G-Cter in SUMO2)). The residue at position 261 (S261) is a Phosphoserine. K276 is subject to N6-acetyllysine. Glycyl lysine isopeptide (Lys-Gly) (interchain with G-Cter in SUMO2) cross-links involve residues K314 and K322.

It belongs to the BRX1 family.

Its subcellular location is the nucleus. The protein resides in the nucleolus. Required for biogenesis of the 60S ribosomal subunit. The protein is Ribosome biogenesis protein BRX1 homolog (BRIX1) of Pongo abelii (Sumatran orangutan).